The chain runs to 277 residues: Large ribosomal subunit protein uL2c (277 aa).

A disordered region spans residues 223 to 277 (VVMNPIDHPHGGGEGRAPIGRKKPLTPWGHPALGKRSRKNNKYSDTLILRRRKNS).

This sequence belongs to the universal ribosomal protein uL2 family. Part of the 50S ribosomal subunit.

The protein localises to the plastid. It is found in the chloroplast. This chain is Large ribosomal subunit protein uL2c (rpl2), found in Marchantia polymorpha (Common liverwort).